The chain runs to 165 residues: Lithostathine (165 aa).

The first 21 residues, 1-21 (MTRNKYFILLSCLMVLSPSQG), serve as a signal peptide directing secretion. Residue Gln-22 is modified to Pyrrolidone carboxylic acid. One can recognise a C-type lectin domain in the interval 33–163 (ITCPEGSNAY…DAQLSFVCKF (131 aa)). Cystine bridges form between Cys-35–Cys-46, Cys-63–Cys-161, and Cys-136–Cys-153. Asn-129 carries N-linked (GlcNAc...) asparagine glycosylation.

In terms of tissue distribution, expressed only in regenerating islets, but not in normal pancreatic islets, insulinomas or regenerating liver.

It is found in the secreted. Might act as an inhibitor of spontaneous calcium carbonate precipitation. This Rattus norvegicus (Rat) protein is Lithostathine (Reg1).